A 95-amino-acid polypeptide reads, in one-letter code: uncharacterized protein (95 aa).

This is an uncharacterized protein from Autographa californica nuclear polyhedrosis virus (AcMNPV).